A 403-amino-acid polypeptide reads, in one-letter code: S-adenosylmethionine synthase (403 aa).

Residue His16 coordinates ATP. Asp18 provides a ligand contact to Mg(2+). Glu44 serves as a coordination point for K(+). Positions 57 and 100 each coordinate L-methionine. Positions 100 to 110 (QSNDIAQGVDH) are flexible loop. ATP-binding positions include 167–169 (DAK), 238–239 (RF), Asp247, 253–254 (RK), Ala270, and Lys274. Asp247 contacts L-methionine. Lys278 is a binding site for L-methionine.

It belongs to the AdoMet synthase family. Homotetramer; dimer of dimers. Requires Mg(2+) as cofactor. It depends on K(+) as a cofactor.

The protein resides in the cytoplasm. It catalyses the reaction L-methionine + ATP + H2O = S-adenosyl-L-methionine + phosphate + diphosphate. Its pathway is amino-acid biosynthesis; S-adenosyl-L-methionine biosynthesis; S-adenosyl-L-methionine from L-methionine: step 1/1. Catalyzes the formation of S-adenosylmethionine (AdoMet) from methionine and ATP. The overall synthetic reaction is composed of two sequential steps, AdoMet formation and the subsequent tripolyphosphate hydrolysis which occurs prior to release of AdoMet from the enzyme. The protein is S-adenosylmethionine synthase of Verminephrobacter eiseniae (strain EF01-2).